Here is a 105-residue protein sequence, read N- to C-terminus: Met repressor (105 aa).

This sequence belongs to the MetJ family. Homodimer.

The protein resides in the cytoplasm. In terms of biological role, this regulatory protein, when combined with SAM (S-adenosylmethionine) represses the expression of the methionine regulon and of enzymes involved in SAM synthesis. This chain is Met repressor, found in Actinobacillus succinogenes (strain ATCC 55618 / DSM 22257 / CCUG 43843 / 130Z).